Here is a 549-residue protein sequence, read N- to C-terminus: Endoplasmic reticulum mannosyl-oligosaccharide 1,2-alpha-mannosidase (549 aa).

Residues 1-4 (MKNS) are Cytoplasmic-facing. Residues 5 to 24 (VGISIATIVAIIAAIYYVPW) form a helical; Signal-anchor for type II membrane protein membrane-spanning segment. The Lumenal portion of the chain corresponds to 25–354 (YEHFERKSPG…LLASGSTEGL (330 aa)). 3 N-linked (GlcNAc...) asparagine glycosylation sites follow: N96, N155, and N224. A disulfide bond links C340 and C385. E399 (proton donor) is an active-site residue. A disulfide bond links C468 and C471. T525 is a binding site for Ca(2+).

It belongs to the glycosyl hydrolase 47 family. As to quaternary structure, homodimer. Ca(2+) serves as cofactor.

It localises to the endoplasmic reticulum membrane. It catalyses the reaction N(4)-(alpha-D-Man-(1-&gt;2)-alpha-D-Man-(1-&gt;2)-alpha-D-Man-(1-&gt;3)-[alpha-D-Man-(1-&gt;2)-alpha-D-Man-(1-&gt;3)-[alpha-D-Man-(1-&gt;2)-alpha-D-Man-(1-&gt;6)]-alpha-D-Man-(1-&gt;6)]-beta-D-Man-(1-&gt;4)-beta-D-GlcNAc-(1-&gt;4)-beta-D-GlcNAc)-L-asparaginyl-[protein] (N-glucan mannose isomer 9A1,2,3B1,2,3) + 4 H2O = N(4)-(alpha-D-Man-(1-&gt;3)-[alpha-D-Man-(1-&gt;3)-[alpha-D-Man-(1-&gt;6)]-alpha-D-Man-(1-&gt;6)]-beta-D-Man-(1-&gt;4)-beta-D-GlcNAc-(1-&gt;4)-beta-D-GlcNAc)-L-asparaginyl-[protein] (N-glucan mannose isomer 5A1,2) + 4 beta-D-mannose. The catalysed reaction is N(4)-(alpha-D-Man-(1-&gt;2)-alpha-D-Man-(1-&gt;2)-alpha-D-Man-(1-&gt;3)-[alpha-D-Man-(1-&gt;3)-[alpha-D-Man-(1-&gt;2)-alpha-D-Man-(1-&gt;6)]-alpha-D-Man-(1-&gt;6)]-beta-D-Man-(1-&gt;4)-beta-D-GlcNAc-(1-&gt;4)-beta-D-GlcNAc)-L-asparaginyl-[protein] (N-glucan mannose isomer 8A1,2,3B1,3) + 3 H2O = N(4)-(alpha-D-Man-(1-&gt;3)-[alpha-D-Man-(1-&gt;3)-[alpha-D-Man-(1-&gt;6)]-alpha-D-Man-(1-&gt;6)]-beta-D-Man-(1-&gt;4)-beta-D-GlcNAc-(1-&gt;4)-beta-D-GlcNAc)-L-asparaginyl-[protein] (N-glucan mannose isomer 5A1,2) + 3 beta-D-mannose. It functions in the pathway protein modification; protein glycosylation. In terms of biological role, involved in glycoprotein quality control as it is important for the targeting of misfolded glycoproteins for degradation. It primarily trims a single alpha-1,2-linked mannose residue from Man(9)GlcNAc(2) to produce Man(8)GlcNAc(2), but at high enzyme concentrations it further trims the carbohydrates to Man(5)GlcNAc(2). The polypeptide is Endoplasmic reticulum mannosyl-oligosaccharide 1,2-alpha-mannosidase (MNS1) (Saccharomyces cerevisiae (strain ATCC 204508 / S288c) (Baker's yeast)).